The chain runs to 177 residues: MTYRKDLIASLIRDVPDFPEPGVTFKDITPLLANPNGYAAAISELVDTASRDVDVVLGMEARGFMFAGPVALSLGAGFVPVRKPGKLPGDVYSQSFVLEYGSATLTVHQDAVQPGSKVLIVDDVLATAGTVRATASLVEQLGAELVGVSVLIELSALGGREKLDRAGIGPVNAVLTI.

Belongs to the purine/pyrimidine phosphoribosyltransferase family. In terms of assembly, homodimer.

The protein localises to the cytoplasm. It catalyses the reaction AMP + diphosphate = 5-phospho-alpha-D-ribose 1-diphosphate + adenine. It functions in the pathway purine metabolism; AMP biosynthesis via salvage pathway; AMP from adenine: step 1/1. In terms of biological role, catalyzes a salvage reaction resulting in the formation of AMP, that is energically less costly than de novo synthesis. This chain is Adenine phosphoribosyltransferase, found in Cutibacterium acnes (strain DSM 16379 / KPA171202) (Propionibacterium acnes).